Here is a 160-residue protein sequence, read N- to C-terminus: UPF0178 protein PA14_69280 (160 aa).

The protein belongs to the UPF0178 family.

This chain is UPF0178 protein PA14_69280, found in Pseudomonas aeruginosa (strain UCBPP-PA14).